We begin with the raw amino-acid sequence, 36 residues long: Fructose-1,6-/sedoheptulose-1,7-bisphosphate aldolase (36 aa).

The polypeptide is Fructose-1,6-/sedoheptulose-1,7-bisphosphate aldolase (cbbA) (Nitrobacter vulgaris).